The sequence spans 284 residues: L-ribulose-5-phosphate 3-epimerase UlaE (284 aa).

The protein belongs to the L-ribulose-5-phosphate 3-epimerase family.

It catalyses the reaction L-ribulose 5-phosphate = L-xylulose 5-phosphate. Its pathway is cofactor degradation; L-ascorbate degradation; D-xylulose 5-phosphate from L-ascorbate: step 3/4. Its function is as follows. Catalyzes the isomerization of L-xylulose-5-phosphate to L-ribulose-5-phosphate. Is involved in the anaerobic L-ascorbate utilization. This is L-ribulose-5-phosphate 3-epimerase UlaE from Shigella flexneri.